Consider the following 520-residue polypeptide: MGENDESEIIEHHDDEEMEKRRPPRTHAQSFLESVASSVKEGHSSTQSSHRLLAYSDALISIIATVMILPVAHTKIQEDEELKQSIQALLTTKIAVYLMTFLIVTVAWAAHIRLFQVIERIDDTLALLNLACMMLITFLPYTFSLMATFPNNILGILLFCACVMVIGLIQALIVLYGFSHPFLLNDQIQMSENQAYYKQHILKVIMRVPIMCLFASIFSFIFFQLSYVLLAIVIFLPYISQCLKWIRSKAIGGQTDESPDSMPFYTYHPSEPLSKERVEAFSDGVFAIVATLLILDICEGNVPDPSVVKKKFDNSLIAALQEYGPEYLAYFGSFVTVGLLWFVHHSLFLHVTKATRLMGLFNTFSLAFVGGLPLAYQLTHESPRGSRNELEAVQISCVIIFFASLFQLAIWVTALFTERETLHPYVRYGGREHTFMLAKLSLYPCVALGTFFITCILSRFSAPIFHMMEICIPFAFLLLRLLVRVALALLRWLFCSARNDLERIPVEEEESRLPINDIVT.

The disordered stretch occupies residues 1–27; sequence MGENDESEIIEHHDDEEMEKRRPPRTH. Topologically, residues 1-49 are cytoplasmic; it reads MGENDESEIIEHHDDEEMEKRRPPRTHAQSFLESVASSVKEGHSSTQSS. The span at 9 to 21 shows a compositional bias: basic and acidic residues; the sequence is IIEHHDDEEMEKR. A helical membrane pass occupies residues 50-72; sequence HRLLAYSDALISIIATVMILPVA. The short motif at 51 to 57 is the RxxxFSD motif 1 element; it reads RLLAYSD. Topologically, residues 73–93 are lumenal; it reads HTKIQEDEELKQSIQALLTTK. Residues 74–79 form a short helix H1-1 region; it reads TKIQED. Positions 81–87 are short helix H2-1; it reads ELKQSIQ. A helical transmembrane segment spans residues 94–116; that stretch reads IAVYLMTFLIVTVAWAAHIRLFQ. The Cytoplasmic segment spans residues 117–122; the sequence is VIERID. A helical membrane pass occupies residues 123–144; it reads DTLALLNLACMMLITFLPYTFS. Topologically, residues 145-154 are lumenal; sequence LMATFPNNIL. The helical transmembrane segment at 155–176 threads the bilayer; the sequence is GILLFCACVMVIGLIQALIVLY. Over 177-200 the chain is Cytoplasmic; it reads GFSHPFLLNDQIQMSENQAYYKQH. A run of 2 helical transmembrane segments spans residues 201–221 and 222–242; these read ILKVIMRVPIMCLFASIFSFI and FFQLSYVLLAIVIFLPYISQC. The Cytoplasmic portion of the chain corresponds to 243-274; that stretch reads LKWIRSKAIGGQTDESPDSMPFYTYHPSEPLS. A helical transmembrane segment spans residues 275 to 299; it reads KERVEAFSDGVFAIVATLLILDICE. Positions 277-283 match the RxxxFSD motif 2 motif; the sequence is RVEAFSD. The Lumenal segment spans residues 300–326; it reads GNVPDPSVVKKKFDNSLIAALQEYGPE. The tract at residues 305-313 is short helix H1-2; that stretch reads PSVVKKKFD. The short helix H2-2 stretch occupies residues 315 to 321; it reads SLIAALQ. A helical membrane pass occupies residues 327 to 349; it reads YLAYFGSFVTVGLLWFVHHSLFL. Topologically, residues 350-355 are cytoplasmic; the sequence is HVTKAT. A helical transmembrane segment spans residues 356–377; that stretch reads RLMGLFNTFSLAFVGGLPLAYQ. Residues 378-392 lie on the Lumenal side of the membrane; it reads LTHESPRGSRNELEA. A helical transmembrane segment spans residues 393-413; that stretch reads VQISCVIIFFASLFQLAIWVT. Over 414 to 433 the chain is Cytoplasmic; the sequence is ALFTERETLHPYVRYGGREH. Residues 434–457 traverse the membrane as a helical segment; that stretch reads TFMLAKLSLYPCVALGTFFITCIL. Residues 458-459 are Lumenal-facing; sequence SR. The helical transmembrane segment at 460-486 threads the bilayer; that stretch reads FSAPIFHMMEICIPFAFLLLRLLVRVA. Over 487–520 the chain is Cytoplasmic; that stretch reads LALLRWLFCSARNDLERIPVEEEESRLPINDIVT.

It belongs to the TMEM175 family. As to quaternary structure, homodimer.

The protein resides in the endosome membrane. It localises to the lysosome membrane. The enzyme catalyses H(+)(in) = H(+)(out). It carries out the reaction K(+)(in) = K(+)(out). Its activity is regulated as follows. Active at low pH (under pH 4.6): proton channel activity is activated by luminal side protons. Polyunsaturated fatty acids, such as arachidonic acid, also activate the channel activity. Its function is as follows. Proton-activated proton channel that catalyzes proton efflux from endosomes and lysosomes to maintain a steady-state pH. Activated at low pH (under pH 4.6) by luminal side protons: selectively mediates lysosomal proton release from lysosomes, eliciting a proton leak that balances V-ATPase activity to maintain pH homeostasis. Regulation of lumenal pH stability is required for autophagosome-lysosome fusion. Also acts as a potassium channel at higher pH, regulating potassium conductance in endosomes and lysosomes. This is Endosomal/lysosomal proton channel TMEM175 from Danio rerio (Zebrafish).